The sequence spans 418 residues: eIF5-mimic protein 2-B (418 aa).

Over residues 1 to 15 (MSYQKQQKPTLTGQR) the composition is skewed to polar residues. The disordered stretch occupies residues 1 to 29 (MSYQKQQKPTLTGQRFKTRKRDEKERFDP). The W2 domain maps to 247-414 (NQQSLGARKE…KNAEEESESE (168 aa)).

The protein belongs to the BZW family.

Translation initiation regulator which may repress repeat-associated non-AUG (RAN) initiated translation probably by acting as a competitive inhibitor of eukaryotic translation initiation factor 5 (EIF5) function. Enhances histone H4 gene transcription but does not seem to bind DNA directly. In Danio rerio (Zebrafish), this protein is eIF5-mimic protein 2-B (bzw1b).